The primary structure comprises 654 residues: Bifunctional 3'-phosphoadenosine 5'-phosphosulfate synthase pps-1 (654 aa).

Residues 1 to 26 (MLTPRDENNEGDAMPMLKKPRYSSLS) are disordered. The adenylyl-sulfate kinase stretch occupies residues 1 to 231 (MLTPRDENNE…VLDHLESKGL (231 aa)). Residue 66 to 71 (GAGKTT) coordinates ATP. Adenosine 5'-phosphosulfate contacts are provided by residues 93-96 (DNIR), F105, 110-113 (RQEN), 136-137 (IS), K175, and 190-191 (GF). ATP is bound by residues C218, 449-452 (QLRN), 550-554 (GRDPA), and A592. The sulfate adenylyltransferase stretch occupies residues 242–653 (VRELFVSDDL…AGYYKSLQNS (412 aa)).

The protein in the N-terminal section; belongs to the APS kinase family. This sequence in the C-terminal section; belongs to the sulfate adenylyltransferase family.

The protein localises to the nucleus. It catalyses the reaction sulfate + ATP + H(+) = adenosine 5'-phosphosulfate + diphosphate. The catalysed reaction is adenosine 5'-phosphosulfate + ATP = 3'-phosphoadenylyl sulfate + ADP + H(+). It participates in sulfur metabolism; sulfate assimilation. Bifunctional enzyme with both ATP sulfurylase and APS kinase activity, which mediates two steps in the sulfate activation pathway. The first step is the transfer of a sulfate group to ATP to yield adenosine 5'-phosphosulfate (APS), and the second step is the transfer of a phosphate group from ATP to APS yielding 3'-phosphoadenylylsulfate (PAPS: activated sulfate donor used by sulfotransferase). Required for normal growth and development. Involved in several aspects of both embryonic and postembryonic development, including molting, changes in cell shape, and patterning of epithelial and muscle cells. This Caenorhabditis elegans protein is Bifunctional 3'-phosphoadenosine 5'-phosphosulfate synthase pps-1.